We begin with the raw amino-acid sequence, 389 residues long: Sinapine esterase (389 aa).

The N-terminal stretch at 1–25 (MASSLKKLITSFLLFFFYTIIVASS) is a signal peptide. Residue S41 is the Nucleophile of the active site. N104, N137, and N320 each carry an N-linked (GlcNAc...) asparagine glycan. Active-site residues include D345 and H348. N-linked (GlcNAc...) asparagine glycosylation is found at N372 and N383.

This sequence belongs to the 'GDSL' lipolytic enzyme family. Expressed in most tissues or organs of the mature seedlings. Not expressed in roots of mature seedlings.

The protein localises to the secreted. The catalysed reaction is O-sinapoylcholine + H2O = (E)-sinapate + choline + H(+). Inhibited by PMSF. Functionally, sinapine esterase that catalyzes that hydrolysis of sinapine, releasing choline and sinapate. Sinapine (O-sinapoylcholine) is the predominant phenolic compound in a complex group of sinapate esters in seeds of oilseed rape (B.napus). Sinapine has antinutritive activity and prevents the use of seed protein for food and feed. Shows broad substrate specificity towards various other choline esters, including phosphatidylcholine. This Brassica napus (Rape) protein is Sinapine esterase.